A 159-amino-acid chain; its full sequence is MEQKKLAIIATKGSLDWAYPPFILASTAAALGYEVQVFFTFYGLQLLKKKPNLEVTPLGNPGMPMPMGMDKWFPVLGLALPGMQGMMTAMMKQKMKSKGVASIEELRELCQEAEVKMIACQMTVDLFDMPKAEFIDGVEYAGAAAFFEFAGESDICLYI.

2 helical membrane passes run 21 to 43 and 72 to 91; these read PFIL…TFYG and WFPV…TAMM.

The protein localises to the cell membrane. Its pathway is energy metabolism; sulfur metabolism. Its function is as follows. Sulfur carrier protein probably involved in sulfur trafficking for oxidative dissimilatory sulfur metabolism. May be a component of a cytoplasmic sulfur relay system delivering sulfur to DsrC. Binds sulfur in the presence of sulfide in vitro. The sequence is that of Sulfur carrier protein DsrE2 from Allochromatium vinosum (strain ATCC 17899 / DSM 180 / NBRC 103801 / NCIMB 10441 / D) (Chromatium vinosum).